A 224-amino-acid chain; its full sequence is LexA repressor (224 aa).

The segment at residues arginine 31–glutamine 51 is a DNA-binding region (H-T-H motif). Catalysis depends on for autocatalytic cleavage activity residues serine 142 and lysine 179.

The protein belongs to the peptidase S24 family. Homodimer.

It catalyses the reaction Hydrolysis of Ala-|-Gly bond in repressor LexA.. In terms of biological role, represses a number of genes involved in the response to DNA damage (SOS response), including recA and lexA. In the presence of single-stranded DNA, RecA interacts with LexA causing an autocatalytic cleavage which disrupts the DNA-binding part of LexA, leading to derepression of the SOS regulon and eventually DNA repair. The protein is LexA repressor of Albidiferax ferrireducens (strain ATCC BAA-621 / DSM 15236 / T118) (Rhodoferax ferrireducens).